The following is a 240-amino-acid chain: Methylthioribulose-1-phosphate dehydratase (240 aa).

Substrate is bound at residue cysteine 99. The Zn(2+) site is built by histidine 116 and histidine 118. Glutamate 145 (proton donor/acceptor) is an active-site residue. Histidine 201 provides a ligand contact to Zn(2+).

This sequence belongs to the aldolase class II family. MtnB subfamily. Zn(2+) serves as cofactor.

The protein localises to the cytoplasm. It catalyses the reaction 5-(methylsulfanyl)-D-ribulose 1-phosphate = 5-methylsulfanyl-2,3-dioxopentyl phosphate + H2O. It functions in the pathway amino-acid biosynthesis; L-methionine biosynthesis via salvage pathway; L-methionine from S-methyl-5-thio-alpha-D-ribose 1-phosphate: step 2/6. Its function is as follows. Catalyzes the dehydration of methylthioribulose-1-phosphate (MTRu-1-P) into 2,3-diketo-5-methylthiopentyl-1-phosphate (DK-MTP-1-P). The chain is Methylthioribulose-1-phosphate dehydratase from Paracoccidioides brasiliensis (strain Pb03).